The primary structure comprises 221 residues: GTP-binding nuclear protein Ran-1 (221 aa).

Residues 10 to 174 (DYPSFKLVIV…LYLARKLAGD (165 aa)) enclose the Small GTPase Ran-type domain. 21–28 (DGGTGKTT) lines the GTP pocket. The switch-I stretch occupies residues 40–48 (KKYEPTIGV). Residues Gly71, 125-128 (NKVD), and 153-155 (SAK) contribute to the GTP site. Residues 71 to 87 (GQEKFGGLRDGYYIHGQ) are switch-II.

Belongs to the small GTPase superfamily. Ran family. Found in a nuclear export complex with RanGTP, exportin and pre-miRNA. Interacts with RANBP1A and RANBP1B. Interacts with TRN1. Interacts with ATX1. Interacts with KPNB1. Binds to XPO1. Interacts with MOS14. Binds to NTF2B.

The protein resides in the nucleus. GTP-binding protein involved in nucleocytoplasmic transport. Required for the import of protein into the nucleus and also for RNA export. Involved in chromatin condensation and control of cell cycle. This Arabidopsis thaliana (Mouse-ear cress) protein is GTP-binding nuclear protein Ran-1 (RAN1).